We begin with the raw amino-acid sequence, 199 residues long: Recombination protein RecR (199 aa).

A C4-type zinc finger spans residues 57-72; sequence CEKCNNFTEEVVCELC. The region spanning 80–175 is the Toprim domain; sequence ALLCVVEMPA…KITRIARGLP (96 aa).

The protein belongs to the RecR family.

Its function is as follows. May play a role in DNA repair. It seems to be involved in an RecBC-independent recombinational process of DNA repair. It may act with RecF and RecO. In Nitrosospira multiformis (strain ATCC 25196 / NCIMB 11849 / C 71), this protein is Recombination protein RecR.